A 246-amino-acid chain; its full sequence is Probable phosphatase Tola_0828 (246 aa).

Residues histidine 8, histidine 10, histidine 16, histidine 41, glutamate 74, histidine 102, histidine 132, aspartate 193, and histidine 195 each contribute to the Zn(2+) site.

Belongs to the PHP family. Zn(2+) is required as a cofactor.

This is Probable phosphatase Tola_0828 from Tolumonas auensis (strain DSM 9187 / NBRC 110442 / TA 4).